Reading from the N-terminus, the 380-residue chain is MIAGSKLLMLGLFGALAVHALPEPAKAQVTAAPKLEERATSCTFSGSAGASSASKSKTACATIVLSAVAVPSGTTLDLTGLNDGTTVIFEGETTFGYKEWSGPLVSVSGTDITVKGASGATLNGDGSRWWDGKGSNGGKTKPKFFYAHKMFSSTISDIHIVNSPVQVFSINGATDLTLSGITVDNRDGDTDEGGHNTDAFDVGSSTGITITGATVYNQDDCLAVNSGTDITFTGGLCSGGHGLSIGSVGGRSNNDVANVIIENSQIQDSTNGVRIKTVYEATGSVKNVTYKDITLSGITKYGIVIEQDYENGSPTGTPTDGVPITDLTLDGVKGTVASSGTNVYILCAEGACSDWTWDGVSVSGGKTSSACENVPSSASC.

A signal peptide spans 1–20 (MIAGSKLLMLGLFGALAVHA). Residues 21-38 (LPEPAKAQVTAAPKLEER) constitute a propeptide that is removed on maturation. A disulfide bridge connects residues Cys-42 and Cys-60. 2 PbH1 repeats span residues 173 to 204 (ATDL…DVGS) and 205 to 226 (STGI…AVNS). The active-site Proton donor is the Asp-219. A disulfide bond links Cys-221 and Cys-237. Residue His-241 is part of the active site. PbH1 repeat units follow at residues 256–277 (VANV…RIKT), 285–307 (VKNV…VIEQ), and 319–364 (TDGV…SVSG). Asn-287 carries N-linked (GlcNAc...) asparagine glycosylation. 2 disulfide bridges follow: Cys-347/Cys-352 and Cys-371/Cys-380.

Belongs to the glycosyl hydrolase 28 family.

The protein resides in the secreted. It carries out the reaction (1,4-alpha-D-galacturonosyl)n+m + H2O = (1,4-alpha-D-galacturonosyl)n + (1,4-alpha-D-galacturonosyl)m.. The polypeptide is Polygalacturonase 2 (PG2) (Penicillium olsonii).